The chain runs to 1065 residues: Outer capsid protein VP3 (1065 aa).

Its subcellular location is the virion. It catalyses the reaction a 5'-end diphospho-ribonucleoside in mRNA + GTP + H(+) = a 5'-end (5'-triphosphoguanosine)-ribonucleoside in mRNA + diphosphate. The catalysed reaction is a 5'-end (5'-triphosphoguanosine)-ribonucleoside in mRNA + S-adenosyl-L-methionine = a 5'-end (N(7)-methyl 5'-triphosphoguanosine)-ribonucleoside in mRNA + S-adenosyl-L-homocysteine. In terms of biological role, outer capsid protein involved in mRNA capping. Catalyzes the last 3 enzymatic activities for formation of the 5' cap structure on the viral plus-strand transcripts, namely the RNA guanylyltransferase, RNA-7N- and RNA-2'O-methyltransferase activities. The protein is Outer capsid protein VP3 (S3) of Cryphonectria parasitica mycoreovirus 1 (strain 9B21) (CpMYRV-1).